The sequence spans 244 residues: Phosphoadenosine 5'-phosphosulfate reductase (244 aa).

Cysteine 239 serves as the catalytic Nucleophile; cysteine thiosulfonate intermediate.

This sequence belongs to the PAPS reductase family. CysH subfamily.

It is found in the cytoplasm. It catalyses the reaction [thioredoxin]-disulfide + sulfite + adenosine 3',5'-bisphosphate + 2 H(+) = [thioredoxin]-dithiol + 3'-phosphoadenylyl sulfate. It functions in the pathway sulfur metabolism; hydrogen sulfide biosynthesis; sulfite from sulfate: step 3/3. Its function is as follows. Catalyzes the formation of sulfite from phosphoadenosine 5'-phosphosulfate (PAPS) using thioredoxin as an electron donor. The sequence is that of Phosphoadenosine 5'-phosphosulfate reductase from Photorhabdus laumondii subsp. laumondii (strain DSM 15139 / CIP 105565 / TT01) (Photorhabdus luminescens subsp. laumondii).